A 785-amino-acid chain; its full sequence is Cation/H(+) antiporter 1 (785 aa).

The next 12 membrane-spanning stretches (helical) occupy residues 19 to 39 (LNTM…FYLF), 44 to 64 (GQAG…LTII), 79 to 99 (YYIF…GLEI), 112 to 132 (IVIT…FLWF), 143 to 163 (FLTF…PVVI), 179 to 199 (LAIS…TIVL), 201 to 221 (FISG…GVII), 240 to 260 (YLSK…ALTI), 294 to 314 (YPIH…RFSV), 323 to 343 (LVLG…VLFA), 352 to 372 (QYWL…LVLL), and 389 to 409 (MFVA…SLLL).

The protein belongs to the monovalent cation:proton antiporter 2 (CPA2) transporter (TC 2.A.37) family. CHX (TC 2.A.37.4) subfamily. Specifically expressed in pollen.

It is found in the membrane. Functionally, may operate as a cation/H(+) antiporter. The protein is Cation/H(+) antiporter 1 (CHX1) of Arabidopsis thaliana (Mouse-ear cress).